Consider the following 124-residue polypeptide: UPF0482 protein YpsIP31758_1865 (124 aa).

An N-terminal signal peptide occupies residues 1–32 (MMKINNLPRLIRTFLPATLLMLPLVWQTPALA). Residues 47 to 68 (GGNNDPMSKEQARQSQQQWDET) are disordered.

It belongs to the UPF0482 family.

The protein is UPF0482 protein YpsIP31758_1865 of Yersinia pseudotuberculosis serotype O:1b (strain IP 31758).